Consider the following 193-residue polypeptide: Imidazoleglycerol-phosphate dehydratase (193 aa).

Belongs to the imidazoleglycerol-phosphate dehydratase family.

Its subcellular location is the cytoplasm. The enzyme catalyses D-erythro-1-(imidazol-4-yl)glycerol 3-phosphate = 3-(imidazol-4-yl)-2-oxopropyl phosphate + H2O. It participates in amino-acid biosynthesis; L-histidine biosynthesis; L-histidine from 5-phospho-alpha-D-ribose 1-diphosphate: step 6/9. This is Imidazoleglycerol-phosphate dehydratase (hisB) from Saccharolobus solfataricus (strain ATCC 35092 / DSM 1617 / JCM 11322 / P2) (Sulfolobus solfataricus).